Here is a 308-residue protein sequence, read N- to C-terminus: Elongation factor Ts (308 aa).

The segment at 80–83 is involved in Mg(2+) ion dislocation from EF-Tu; it reads TDFV.

It belongs to the EF-Ts family.

The protein resides in the cytoplasm. Associates with the EF-Tu.GDP complex and induces the exchange of GDP to GTP. It remains bound to the aminoacyl-tRNA.EF-Tu.GTP complex up to the GTP hydrolysis stage on the ribosome. This Rhizobium leguminosarum bv. trifolii (strain WSM2304) protein is Elongation factor Ts.